A 97-amino-acid polypeptide reads, in one-letter code: Osteocalcin (97 aa).

The first 18 residues, 1-18 (MKTLAILVLCSLAAICLT), serve as a signal peptide directing secretion. The propeptide occupies 19 to 52 (SSASAGAQPAGDSPVQGGLFMEKDQASAVVRQTR). Positions 53–93 (AAKELTLAQTESLREVCETNMACDEMADAQGIVAAYQAFYG) constitute a Gla domain. The Ca(2+) site is built by Glu63, Glu67, Glu70, and Asp76. Glu63, Glu67, and Glu70 each carry 4-carboxyglutamate. A disulfide bridge links Cys69 with Cys75. 4-carboxyglutamate is present on Glu77.

Belongs to the osteocalcin/matrix Gla protein family. Post-translationally, gamma-carboxyglutamate residues are formed by vitamin K dependent carboxylation by GGCX. These residues are essential for the binding of calcium. In terms of tissue distribution, in the branchial arches, BGP is found outside the chondrocyte-containing zone. It is found in some cells in the basal zone of the branchial filaments, near the branchial arches, and within the extracellular matrix in the medial zone. In the vertebra, BGP is found in the mineralized bone matrix.

It localises to the secreted. In terms of biological role, the carboxylated form is one of the main organic components of the bone matrix, which constitutes 1-2% of the total bone protein. The carboxylated form binds strongly to apatite and calcium. The polypeptide is Osteocalcin (bglap) (Argyrosomus regius (Meagre)).